Reading from the N-terminus, the 386-residue chain is Innexin inx4 (386 aa).

Residues 1–21 lie on the Cytoplasmic side of the membrane; it reads MLEFVRPLQSILQIKQVNSTD. A helical transmembrane segment spans residues 22-42; sequence LVWRLHCRVTVFLLLLASLLL. At 43–111 the chain is on the extracellular side; sequence SARQYFGNPI…ESERSYQKYY (69 aa). The chain crosses the membrane as a helical span at residues 112-132; the sequence is QWVVFILALQACMFSVPNFLW. Residues 133–187 lie on the Cytoplasmic side of the membrane; that stretch reads KAWEAGRLQSLCDGLTTPIVPDHWEKTRKKQLITYLSADFPRLHRTYLLRYCFCT. The chain crosses the membrane as a helical span at residues 188 to 208; sequence LLNFCNVLLNIFLVNVIFSGF. Residues 209-272 lie on the Extracellular side of the membrane; sequence WSNYHPAVKA…LNVVNEKIFA (64 aa). A helical transmembrane segment spans residues 273 to 293; that stretch reads FIWLWFLGLLVISMLNLLFWI. Topologically, residues 294–386 are cytoplasmic; it reads VVLCSKGFRL…DPEGYDEEGV (93 aa). The tract at residues 358-386 is disordered; the sequence is HNGHKTFRMPKGGEPDFYTDPEGYDEEGV. A compositionally biased stretch (acidic residues) spans 374-386; it reads FYTDPEGYDEEGV.

This sequence belongs to the pannexin family.

It localises to the cell membrane. Its subcellular location is the cell junction. The protein localises to the gap junction. In terms of biological role, structural component of gap junctions. Required for normal development of ovary. Required for normal egg production after blood meal. Required for normal development of testis. Its function is as follows. (Microbial infection) Modulates the development of Plasmodium falciparum oocysts. The protein is Innexin inx4 of Anopheles gambiae (African malaria mosquito).